The primary structure comprises 473 residues: Mogroside IIIx synthase (473 aa).

His-21 acts as the Proton acceptor in catalysis. Residue Asp-123 is the Charge relay of the active site. Residues Thr-274, Gln-337, Trp-355, Asn-356, Ser-357, Glu-360, Asp-376, and Gln-377 each coordinate UDP-alpha-D-glucose.

Belongs to the UDP-glycosyltransferase family. In terms of tissue distribution, highly expressed in mature fruits.

It carries out the reaction mogroside IIE + UDP-alpha-D-glucose = mogroside IIIX + UDP + H(+). It catalyses the reaction mogroside III + UDP-alpha-D-glucose = siamenoside I + UDP + H(+). The protein operates within secondary metabolite biosynthesis; terpenoid biosynthesis. In terms of biological role, UDP-glycosyltransferase involved in the biosynthesis of cucurbitacin and mogroside tetracyclic triterpene natural products (e.g. siamenoside I and mogrosides IV, V and VI). Cucurbitacins have cytotoxic properties and exhibit deterrent taste as a defense barrier against herbivores. Mogrosides are nonsugar highly oxygenated compounds used as high-intensity zero-calorie sweeteners; they also possess pharmacological properties such as regulating immunity, lowering blood sugar and lipid levels, protecting the liver, and acting as antioxidants and antitumor agents. Catalyzes the branched glucosylations of mogroside II-E and mogroside III. In Siraitia grosvenorii (Monk's fruit), this protein is Mogroside IIIx synthase.